The primary structure comprises 398 residues: Large ribosomal subunit protein uL3 (398 aa).

Residues 1–10 (MSHRKFEAPR) show a composition bias toward basic and acidic residues. Positions 1–34 (MSHRKFEAPRHGNLGFRPRKRAARHQGKVKSFPK) are disordered. Positions 17-28 (RPRKRAARHQGK) are enriched in basic residues.

Belongs to the universal ribosomal protein uL3 family.

The protein resides in the cytoplasm. Functionally, the L3 protein is a component of the large subunit of cytoplasmic ribosomes. The polypeptide is Large ribosomal subunit protein uL3 (rpl3) (Dictyostelium discoideum (Social amoeba)).